Consider the following 494-residue polypeptide: 3-octaprenyl-4-hydroxybenzoate carboxy-lyase (494 aa).

Asparagine 172 contributes to the Mn(2+) binding site. Prenylated FMN contacts are provided by residues 175 to 177 (IYR), 189 to 191 (RWL), and 194 to 195 (RG). Glutamate 238 is a binding site for Mn(2+). The active-site Proton donor is the aspartate 287.

The protein belongs to the UbiD family. As to quaternary structure, homohexamer. Requires prenylated FMN as cofactor. Mn(2+) is required as a cofactor.

The protein resides in the cell membrane. It catalyses the reaction a 4-hydroxy-3-(all-trans-polyprenyl)benzoate + H(+) = a 2-(all-trans-polyprenyl)phenol + CO2. The protein operates within cofactor biosynthesis; ubiquinone biosynthesis. Its function is as follows. Catalyzes the decarboxylation of 3-octaprenyl-4-hydroxy benzoate to 2-octaprenylphenol, an intermediate step in ubiquinone biosynthesis. The chain is 3-octaprenyl-4-hydroxybenzoate carboxy-lyase from Escherichia coli O9:H4 (strain HS).